Reading from the N-terminus, the 514-residue chain is 2,3-bisphosphoglycerate-independent phosphoglycerate mutase (514 aa).

Mn(2+) is bound by residues D14 and S64. S64 (phosphoserine intermediate) is an active-site residue. Residues H125, 155-156 (RD), R187, R193, 263-266 (RADR), and K336 each bind substrate. Residues D403, H407, D444, H445, and H463 each coordinate Mn(2+).

It belongs to the BPG-independent phosphoglycerate mutase family. As to quaternary structure, monomer. Requires Mn(2+) as cofactor.

The catalysed reaction is (2R)-2-phosphoglycerate = (2R)-3-phosphoglycerate. Its pathway is carbohydrate degradation; glycolysis; pyruvate from D-glyceraldehyde 3-phosphate: step 3/5. In terms of biological role, catalyzes the interconversion of 2-phosphoglycerate and 3-phosphoglycerate. This is 2,3-bisphosphoglycerate-independent phosphoglycerate mutase from Shewanella sp. (strain W3-18-1).